We begin with the raw amino-acid sequence, 397 residues long: Odorant receptor 98a (397 aa).

Residues Met-1–Tyr-43 lie on the Cytoplasmic side of the membrane. A helical transmembrane segment spans residues Tyr-44–Ile-64. Over Ser-65 to Glu-77 the chain is Extracellular. A helical membrane pass occupies residues Leu-78–Phe-98. Residues Asn-99–Ala-138 lie on the Cytoplasmic side of the membrane. A helical membrane pass occupies residues Tyr-139–Leu-159. The Extracellular portion of the chain corresponds to Ser-160–Met-192. Asn-187 carries an N-linked (GlcNAc...) asparagine glycan. The chain crosses the membrane as a helical span at residues Leu-193–Leu-213. The Cytoplasmic portion of the chain corresponds to Arg-214 to Thr-266. A helical membrane pass occupies residues Ile-267–Phe-287. At Phe-288–Thr-293 the chain is on the extracellular side. Residues Gly-294–Val-314 traverse the membrane as a helical segment. Over Cys-315–Lys-354 the chain is Cytoplasmic. A helical membrane pass occupies residues Ser-355–Ala-375. Over Lys-376–Asn-397 the chain is Extracellular.

This sequence belongs to the insect chemoreceptor superfamily. Heteromeric odorant receptor channel (TC 1.A.69) family. Or2a subfamily. In terms of assembly, interacts with Orco. Complexes exist early in the endomembrane system in olfactory sensory neurons (OSNs), coupling these complexes to the conserved ciliary trafficking pathway. Expressed in olfactory sensory neurons in the antenna.

It is found in the cell membrane. In terms of biological role, odorant receptor which mediates acceptance or avoidance behavior, depending on its substrates. The odorant receptor repertoire encodes a large collection of odor stimuli that vary widely in identity, intensity, and duration. May form a complex with Orco to form odorant-sensing units, providing sensitive and prolonged odorant signaling and calcium permeability. The protein is Odorant receptor 98a (Or98a) of Drosophila melanogaster (Fruit fly).